The chain runs to 100 residues: Carboxysome shell vertex protein CcmL (100 aa).

Residues 1-83 enclose the BMV domain; that stretch reads MQLAKVLGTV…LDAMVVGIID (83 aa).

Belongs to the CcmL/EutN family. CcmL subfamily. Homopentamer. Interacts with full-length CcmM.

The protein localises to the carboxysome. In terms of biological role, probably forms vertices in the carboxysome, a polyhedral inclusion where RuBisCO (ribulose bisphosphate carboxylase, rbcL-rbcS) is sequestered. Has been modeled to induce curvature upon insertion into an otherwise flat hexagonal molecular layer of CcmK subunits. The protein is Carboxysome shell vertex protein CcmL of Synechocystis sp. (strain ATCC 27184 / PCC 6803 / Kazusa).